Here is a 715-residue protein sequence, read N- to C-terminus: Elongation factor G (715 aa).

Residues 12–309 enclose the tr-type G domain; it reads RRVRNIGIMA…GVIDYLPSPL (298 aa). GTP contacts are provided by residues 21–28, 108–112, and 162–165; these read AHIDAGKT, DTPGH, and NKMD.

The protein belongs to the TRAFAC class translation factor GTPase superfamily. Classic translation factor GTPase family. EF-G/EF-2 subfamily.

The protein resides in the cytoplasm. Functionally, catalyzes the GTP-dependent ribosomal translocation step during translation elongation. During this step, the ribosome changes from the pre-translocational (PRE) to the post-translocational (POST) state as the newly formed A-site-bound peptidyl-tRNA and P-site-bound deacylated tRNA move to the P and E sites, respectively. Catalyzes the coordinated movement of the two tRNA molecules, the mRNA and conformational changes in the ribosome. The polypeptide is Elongation factor G (Rubrobacter xylanophilus (strain DSM 9941 / JCM 11954 / NBRC 16129 / PRD-1)).